The sequence spans 418 residues: Serine hydroxymethyltransferase (418 aa).

Residues L121 and 125 to 127 each bind (6S)-5,6,7,8-tetrahydrofolate; that span reads GHL. N6-(pyridoxal phosphate)lysine is present on K230. (6S)-5,6,7,8-tetrahydrofolate is bound at residue 356-358; that stretch reads SPF.

Belongs to the SHMT family. As to quaternary structure, homodimer. The cofactor is pyridoxal 5'-phosphate.

The protein localises to the cytoplasm. The catalysed reaction is (6R)-5,10-methylene-5,6,7,8-tetrahydrofolate + glycine + H2O = (6S)-5,6,7,8-tetrahydrofolate + L-serine. It functions in the pathway one-carbon metabolism; tetrahydrofolate interconversion. The protein operates within amino-acid biosynthesis; glycine biosynthesis; glycine from L-serine: step 1/1. Catalyzes the reversible interconversion of serine and glycine with tetrahydrofolate (THF) serving as the one-carbon carrier. This reaction serves as the major source of one-carbon groups required for the biosynthesis of purines, thymidylate, methionine, and other important biomolecules. Also exhibits THF-independent aldolase activity toward beta-hydroxyamino acids, producing glycine and aldehydes, via a retro-aldol mechanism. This Shewanella woodyi (strain ATCC 51908 / MS32) protein is Serine hydroxymethyltransferase.